Consider the following 160-residue polypeptide: Nucleotide-binding protein Patl_4311 (160 aa).

This sequence belongs to the YajQ family.

In terms of biological role, nucleotide-binding protein. The polypeptide is Nucleotide-binding protein Patl_4311 (Pseudoalteromonas atlantica (strain T6c / ATCC BAA-1087)).